The sequence spans 151 residues: UPF0756 membrane protein Dred_1676 (151 aa).

The next 4 membrane-spanning stretches (helical) occupy residues 9-29 (VILLLIGLVAQSNLIAICASV), 47-67 (THGLELGLLFLLLSILVPIAT), 75-95 (LLYNVSSLPGFLSIVGGILAT), and 111-131 (IIFGLIVGSVIGIIFFNGQPV).

The protein belongs to the UPF0756 family.

The protein localises to the cell membrane. The polypeptide is UPF0756 membrane protein Dred_1676 (Desulforamulus reducens (strain ATCC BAA-1160 / DSM 100696 / MI-1) (Desulfotomaculum reducens)).